A 117-amino-acid polypeptide reads, in one-letter code: MPKRVVAGIVTSDKMSKTRRVEIARLVKHPKYKKYIRRRTVCHVHDENNESGVGDKVEIIESEPLSKLKRWRLVRVLEKSTAVDVVALRAARKNAEAEGLAAAHAGEPETESAATDA.

The segment at 97–117 is disordered; that stretch reads AEGLAAAHAGEPETESAATDA.

This sequence belongs to the universal ribosomal protein uS17 family. In terms of assembly, part of the 30S ribosomal subunit.

Functionally, one of the primary rRNA binding proteins, it binds specifically to the 5'-end of 16S ribosomal RNA. The chain is Small ribosomal subunit protein uS17 from Rhodopirellula baltica (strain DSM 10527 / NCIMB 13988 / SH1).